The sequence spans 131 residues: Small ribosomal subunit protein uS8 (131 aa).

The protein belongs to the universal ribosomal protein uS8 family. As to quaternary structure, part of the 30S ribosomal subunit. Contacts proteins S5 and S12.

Its function is as follows. One of the primary rRNA binding proteins, it binds directly to 16S rRNA central domain where it helps coordinate assembly of the platform of the 30S subunit. In Ruthia magnifica subsp. Calyptogena magnifica, this protein is Small ribosomal subunit protein uS8.